The chain runs to 219 residues: MSNQKALVIFSGGQDSTTCLIQAIQIYGRENVQAITFQYGQRHAVELERARWIAQDLGVKQTVLDLSLMRQITHNALMDDTAAIETAENGVPNTFVDGRNALFLLYAAIYAKGQGIRHIIAGVCETDFSGYPDCRDVFVKSMNVTLNLAMDYDFQIHTPLMYLTKAQTWALADEMGVLDYIREQTHTCYNGIVGGCRECPSCILRERGLAEYLESKKAV.

10 to 20 (FSGGQDSTTCL) serves as a coordination point for ATP. Zn(2+)-binding residues include C188, C196, C199, and C202.

This sequence belongs to the QueC family. The cofactor is Zn(2+).

It catalyses the reaction 7-carboxy-7-deazaguanine + NH4(+) + ATP = 7-cyano-7-deazaguanine + ADP + phosphate + H2O + H(+). It participates in purine metabolism; 7-cyano-7-deazaguanine biosynthesis. Catalyzes the ATP-dependent conversion of 7-carboxy-7-deazaguanine (CDG) to 7-cyano-7-deazaguanine (preQ(0)). The polypeptide is 7-cyano-7-deazaguanine synthase (Neisseria meningitidis serogroup C / serotype 2a (strain ATCC 700532 / DSM 15464 / FAM18)).